The sequence spans 354 residues: MKIAILPGDGIGPEIIAQAERVLEVLRRDGLKIETEHAPLGGAAYDQYGVPYPEATQKLAREADAVLLGAVGGPAYDKLDRPLRPERGLLAIRKDLNLFANLRPAILYPELANASTLKPEVVAGLDIMIVRELTGDIYFGQPRGIAVNELGEREAYNTMRYSESEVRRIAHVAFGIAMKRNRKLCSVDKANVLETTEFWKEIMIEVAKEYPQVELSHMYVDNAAMQLVRNPKQFDVMVTGNIFGDILSDEASMLTGSIGMLPSASLDQNNKGLYEPSHGSAPDIAGQNLANPLATILSAAMMLRYSFGQEAAARRVEDAVKKVLAQGYRTADIYEAGCEKVSCSGMGDAVVAAM.

73 to 86 (GPAYDKLDRPLRPE) contacts NAD(+). Positions 93, 103, 131, and 221 each coordinate substrate. Positions 221, 245, and 249 each coordinate Mg(2+). An NAD(+)-binding site is contributed by 279–291 (GSAPDIAGQNLAN).

The protein belongs to the isocitrate and isopropylmalate dehydrogenases family. LeuB type 1 subfamily. Homodimer. Mg(2+) serves as cofactor. The cofactor is Mn(2+).

The protein localises to the cytoplasm. It carries out the reaction (2R,3S)-3-isopropylmalate + NAD(+) = 4-methyl-2-oxopentanoate + CO2 + NADH. It participates in amino-acid biosynthesis; L-leucine biosynthesis; L-leucine from 3-methyl-2-oxobutanoate: step 3/4. Its function is as follows. Catalyzes the oxidation of 3-carboxy-2-hydroxy-4-methylpentanoate (3-isopropylmalate) to 3-carboxy-4-methyl-2-oxopentanoate. The product decarboxylates to 4-methyl-2 oxopentanoate. This is 3-isopropylmalate dehydrogenase from Chromobacterium violaceum (strain ATCC 12472 / DSM 30191 / JCM 1249 / CCUG 213 / NBRC 12614 / NCIMB 9131 / NCTC 9757 / MK).